The chain runs to 314 residues: DNA-directed RNA polymerase subunit alpha (314 aa).

The tract at residues 1 to 228 (MIEFEKPNIH…EHLAMFVDLT (228 aa)) is alpha N-terminal domain (alpha-NTD). The interval 245 to 314 (KEKMLEMTIE…DLGVSFRQDD (70 aa)) is alpha C-terminal domain (alpha-CTD).

It belongs to the RNA polymerase alpha chain family. In terms of assembly, homodimer. The RNAP catalytic core consists of 2 alpha, 1 beta, 1 beta' and 1 omega subunit. When a sigma factor is associated with the core the holoenzyme is formed, which can initiate transcription.

The catalysed reaction is RNA(n) + a ribonucleoside 5'-triphosphate = RNA(n+1) + diphosphate. Its function is as follows. DNA-dependent RNA polymerase catalyzes the transcription of DNA into RNA using the four ribonucleoside triphosphates as substrates. This is DNA-directed RNA polymerase subunit alpha from Limosilactobacillus reuteri (strain DSM 20016) (Lactobacillus reuteri).